Reading from the N-terminus, the 114-residue chain is Putative cysteine proteinase inhibitor 9 (114 aa).

Positions 1-23 are cleaved as a signal peptide; sequence MRTSSLVLFAAVAVFGAACTAAA.

It belongs to the cystatin family. Phytocystatin subfamily.

The protein resides in the secreted. In terms of biological role, specific inhibitor of cysteine proteinases. Probably involved in the regulation of endogenous processes and in defense against pests and pathogens. In Oryza sativa subsp. japonica (Rice), this protein is Putative cysteine proteinase inhibitor 9.